An 85-amino-acid chain; its full sequence is Large ribosomal subunit protein bL27 (85 aa).

It belongs to the bacterial ribosomal protein bL27 family.

The protein is Large ribosomal subunit protein bL27 of Mycobacteroides abscessus (strain ATCC 19977 / DSM 44196 / CCUG 20993 / CIP 104536 / JCM 13569 / NCTC 13031 / TMC 1543 / L948) (Mycobacterium abscessus).